Consider the following 23-residue polypeptide: Elongation factor Tu (23 aa).

It belongs to the GTP-binding elongation factor family. EF-Tu/EF-1A subfamily. As to quaternary structure, monomer. In terms of processing, the N-terminus is blocked. The C-terminus may be subjected to proteolysis.

The protein localises to the cytoplasm. Its function is as follows. This protein promotes the GTP-dependent binding of aminoacyl-tRNA to the A-site of ribosomes during protein biosynthesis. This chain is Elongation factor Tu (tuf), found in Delftia acidovorans (Pseudomonas acidovorans).